Consider the following 187-residue polypeptide: MAKNLILLGLPGAGKGTQADFIVKDYSIVHISTGDIFRANLAENTELGQKARQFMDAGDLVPDEITNAMVADRLNQQDVETGFMLDGYPRNEAQAVFLDKYLSDNGKSVSATLYFEVADTLLRERLLGRGRADDTPEVIDNRLAVNKAANLPLVDYYQKAGVLHTIDGGRELADVYHDVKEVLDNLN.

Residue 12–17 coordinates ATP; that stretch reads GAGKGT. The NMP stretch occupies residues 32–61; the sequence is STGDIFRANLAENTELGQKARQFMDAGDLV. Residues Thr33, Arg38, 59 to 61, 87 to 90, and Gln94 contribute to the AMP site; these read DLV and GYPR. The tract at residues 128 to 134 is LID; it reads GRGRADD. Arg129 contacts ATP. AMP is bound by residues Arg131 and Arg142. Arg170 contacts ATP.

This sequence belongs to the adenylate kinase family. In terms of assembly, monomer.

It is found in the cytoplasm. It carries out the reaction AMP + ATP = 2 ADP. Its pathway is purine metabolism; AMP biosynthesis via salvage pathway; AMP from ADP: step 1/1. Functionally, catalyzes the reversible transfer of the terminal phosphate group between ATP and AMP. Plays an important role in cellular energy homeostasis and in adenine nucleotide metabolism. This is Adenylate kinase from Leuconostoc mesenteroides subsp. mesenteroides (strain ATCC 8293 / DSM 20343 / BCRC 11652 / CCM 1803 / JCM 6124 / NCDO 523 / NBRC 100496 / NCIMB 8023 / NCTC 12954 / NRRL B-1118 / 37Y).